We begin with the raw amino-acid sequence, 233 residues long: MKNIMILSGAGLSAPSGLKTFRDNDGLWEEYDVMEVCSATGFRKNPKKVLDFYDARRAQLQNVKPNHAHEKIAQLKEKWGKNLFVITQNVDDLLERAGCKDVVHLHGFLPELRCLKCEGIFNIGYEKFTDKQCPKCKSKDLRHNIVMFEEQAPAYATLYSLLHQTSLFISIGTSGAVLPVGQYASMCEKSILNIYEKDVNLERYFDKIYIEDIISAIDKIALDIENFMKDGNV.

The region spanning Met1 to Asp230 is the Deacetylase sirtuin-type domain. Position 9-28 (Gly9–Trp28) interacts with NAD(+). Substrate contacts are provided by Tyr53 and Arg56. Position 88-91 (Gln88–Asp91) interacts with NAD(+). Residue His106 is the Proton acceptor of the active site. 4 residues coordinate Zn(2+): Cys114, Cys117, Cys133, and Cys136. Residues Gly172 to Ser174 and Asn200 to Glu202 contribute to the NAD(+) site.

It belongs to the sirtuin family. Class III subfamily. It depends on Zn(2+) as a cofactor.

It is found in the cytoplasm. The catalysed reaction is N(6)-acetyl-L-lysyl-[protein] + NAD(+) + H2O = 2''-O-acetyl-ADP-D-ribose + nicotinamide + L-lysyl-[protein]. The enzyme catalyses N(6)-succinyl-L-lysyl-[protein] + NAD(+) + H2O = 2''-O-succinyl-ADP-D-ribose + nicotinamide + L-lysyl-[protein]. In terms of biological role, NAD-dependent lysine deacetylase and desuccinylase that specifically removes acetyl and succinyl groups on target proteins. Modulates the activities of several proteins which are inactive in their acylated form. The sequence is that of NAD-dependent protein deacylase from Campylobacter jejuni subsp. jejuni serotype O:2 (strain ATCC 700819 / NCTC 11168).